A 508-amino-acid polypeptide reads, in one-letter code: Steroid 17-alpha-hydroxylase/17,20 lyase (508 aa).

Residue Asn-202 participates in substrate binding. Cys-442 contributes to the heme binding site.

Belongs to the cytochrome P450 family. The cofactor is heme.

It is found in the endoplasmic reticulum membrane. The protein localises to the microsome membrane. The enzyme catalyses a C21-steroid + reduced [NADPH--hemoprotein reductase] + O2 = a 17alpha-hydroxy-C21-steroid + oxidized [NADPH--hemoprotein reductase] + H2O + H(+). It carries out the reaction progesterone + reduced [NADPH--hemoprotein reductase] + O2 = 17alpha-hydroxyprogesterone + oxidized [NADPH--hemoprotein reductase] + H2O + H(+). It catalyses the reaction pregnenolone + reduced [NADPH--hemoprotein reductase] + O2 = 17alpha-hydroxypregnenolone + oxidized [NADPH--hemoprotein reductase] + H2O + H(+). The catalysed reaction is 17alpha-hydroxypregnenolone + reduced [NADPH--hemoprotein reductase] + O2 = 3beta-hydroxyandrost-5-en-17-one + acetate + oxidized [NADPH--hemoprotein reductase] + H2O + 2 H(+). The protein operates within steroid hormone biosynthesis. Its pathway is steroid biosynthesis; glucocorticoid biosynthesis. Regulated predominantly by intracellular cAMP levels. The 17,20-lyase activity is stimulated by cytochrome b5, which acts as an allosteric effector increasing the Vmax of the lyase activity. In terms of biological role, a cytochrome P450 monooxygenase involved in corticoid and androgen biosynthesis. Catalyzes 17-alpha hydroxylation of C21 steroids, which is common for both pathways. A second oxidative step, required only for androgen synthesis, involves an acyl-carbon cleavage. Hydroxylates pregnenolone to form 17-alpha pregnenolone, followed by the cleavage of the C17-C20 bond to form dehydroepiandrosterone (DHEA). Has 17-alpha hydroxylase activity toward progesterone. The 17-alpha hydroxy intermediates, as part of adrenal glucocorticoids biosynthesis pathway, are precursors of cortisol. Mechanistically, uses molecular oxygen inserting one oxygen atom into a substrate, and reducing the second into a water molecule, with two electrons provided by NADPH via cytochrome P450 reductase (CPR; NADPH-ferrihemoprotein reductase). The polypeptide is Steroid 17-alpha-hydroxylase/17,20 lyase (CYP17A1) (Papio hamadryas ursinus (Chacma baboon)).